The chain runs to 1183 residues: DNA-directed RNA polymerase subunit beta' (1183 aa).

Cysteine 60, cysteine 62, cysteine 75, and cysteine 78 together coordinate Zn(2+). Residues aspartate 449, aspartate 451, and aspartate 453 each contribute to the Mg(2+) site. Cysteine 794, cysteine 867, cysteine 874, and cysteine 877 together coordinate Zn(2+).

This sequence belongs to the RNA polymerase beta' chain family. As to quaternary structure, the RNAP catalytic core consists of 2 alpha, 1 beta, 1 beta' and 1 omega subunit. When a sigma factor is associated with the core the holoenzyme is formed, which can initiate transcription. Requires Mg(2+) as cofactor. The cofactor is Zn(2+).

It carries out the reaction RNA(n) + a ribonucleoside 5'-triphosphate = RNA(n+1) + diphosphate. Functionally, DNA-dependent RNA polymerase catalyzes the transcription of DNA into RNA using the four ribonucleoside triphosphates as substrates. The polypeptide is DNA-directed RNA polymerase subunit beta' (Caldanaerobacter subterraneus subsp. tengcongensis (strain DSM 15242 / JCM 11007 / NBRC 100824 / MB4) (Thermoanaerobacter tengcongensis)).